A 392-amino-acid polypeptide reads, in one-letter code: ESX-1 secretion-associated protein EspA (392 aa).

Positions 302-392 (TRQALRPRAD…GQKVLVRNVV (91 aa)) are disordered. Positions 334–344 (QGMGGPVGMGG) are enriched in gly residues.

As to quaternary structure, homodimer; disulfide-linked. An artificial EsxB-EsxA heterodimer interacts with EspA.

Its subcellular location is the secreted. Functionally, required for secretion of EsxA (ESAT-6) and EsxB (CFP-10) and for virulence. Involved in translocation of bacteria from the host (human) phagolysosome to the host cytoplasm. This is ESX-1 secretion-associated protein EspA from Mycobacterium tuberculosis (strain ATCC 25618 / H37Rv).